A 482-amino-acid chain; its full sequence is Zinc finger protein 385B (482 aa).

The required for induction of apoptosis stretch occupies residues methionine 1–leucine 105. 2 Matrin-type zinc fingers span residues serine 34–glutamine 64 and isoleucine 169–alanine 199. 3 disordered regions span residues aspartate 54 to glutamine 75, lysine 189 to leucine 259, and leucine 268 to glutamate 287. The segment at proline 106–tyrosine 482 is interaction with p53/TP53. Residues serine 231 to lysine 240 are compositionally biased toward basic and acidic residues. The Matrin-type 3 zinc-finger motif lies at lysine 294–arginine 328. 2 disordered regions span residues alanine 331 to glycine 352 and histidine 378 to tyrosine 397. The Matrin-type 4 zinc-finger motif lies at phenylalanine 360 to glycine 390.

In terms of assembly, interacts with p53/TP53; the interaction is direct.

It is found in the nucleus. Its function is as follows. May play a role in p53/TP53-mediated apoptosis. The chain is Zinc finger protein 385B (Znf385b) from Mus musculus (Mouse).